Reading from the N-terminus, the 314-residue chain is Olfactory receptor 5I1 (314 aa).

At 1 to 27 the chain is on the extracellular side; it reads MEFTDRNYTLVTEFILLGFPTRPELQI. A glycan (N-linked (GlcNAc...) asparagine) is linked at N7. The helical transmembrane segment at 28–48 threads the bilayer; it reads VLFLMFLTLYAIILIGNIGLM. Residues 49 to 56 lie on the Cytoplasmic side of the membrane; it reads LLIRIDPH. Residues 57-77 form a helical membrane-spanning segment; sequence LQTPMYFFLSNLSFVDLCYFS. Topologically, residues 78–101 are extracellular; the sequence is DIVPKMLVNFLSENKSISYYGCAL. C99 and C191 are joined by a disulfide. A helical membrane pass occupies residues 102-122; it reads QFYFFCTFADTESFILAAMAY. Residues 123 to 141 lie on the Cytoplasmic side of the membrane; the sequence is DRYVAICNPLLYTVVMSRG. Residues 142 to 162 traverse the membrane as a helical segment; that stretch reads ICMRLIVLSYLGGNMSSLVHT. The Extracellular portion of the chain corresponds to 163 to 198; the sequence is SFAFILKYCDKNVINHFFCDLPPLLKLSCTDTTINE. The helical transmembrane segment at 199 to 219 threads the bilayer; that stretch reads WLLSTYGSSVEIICFIIIIIS. Over 220–239 the chain is Cytoplasmic; the sequence is YFFILLSVLKIRSFSGRKKT. Residues 240–260 form a helical membrane-spanning segment; the sequence is FSTCASHLTSVTIYQGTLLFI. Residues 261-273 lie on the Extracellular side of the membrane; the sequence is YSRPSYLYSPNTD. A helical transmembrane segment spans residues 274–294; that stretch reads KIISVFYTIFIPVLNPLIYSL. Residues 295–314 lie on the Cytoplasmic side of the membrane; that stretch reads RNKDVKDAAEKVLRSKVDSS.

This sequence belongs to the G-protein coupled receptor 1 family.

Its subcellular location is the cell membrane. Its function is as follows. Odorant receptor. This is Olfactory receptor 5I1 (OR5I1) from Homo sapiens (Human).